The primary structure comprises 941 residues: Bifunctional uridylyltransferase/uridylyl-removing enzyme (941 aa).

Residues 1 to 372 are uridylyltransferase; it reads MAKHDLSDAT…RFAHRPRRIP (372 aa). Residues 373 to 728 are uridylyl-removing; sequence GTPEFIEDRG…VRTHSFHAIT (356 aa). In terms of domain architecture, HD spans 489–611; that stretch reads VDEHLIRSVG…VQSLDRLRML (123 aa). ACT domains follow at residues 729 to 810 and 840 to 919; these read EITV…EVIA and VIEI…LREQ. The interval 916–941 is disordered; it reads LREQMPSGIIAPAATKSPAAEKKARV.

The protein belongs to the GlnD family. The cofactor is Mg(2+).

It catalyses the reaction [protein-PII]-L-tyrosine + UTP = [protein-PII]-uridylyl-L-tyrosine + diphosphate. The catalysed reaction is [protein-PII]-uridylyl-L-tyrosine + H2O = [protein-PII]-L-tyrosine + UMP + H(+). Uridylyltransferase (UTase) activity is inhibited by glutamine, while glutamine activates uridylyl-removing (UR) activity. In terms of biological role, modifies, by uridylylation and deuridylylation, the PII regulatory proteins (GlnB and homologs), in response to the nitrogen status of the cell that GlnD senses through the glutamine level. Under low glutamine levels, catalyzes the conversion of the PII proteins and UTP to PII-UMP and PPi, while under higher glutamine levels, GlnD hydrolyzes PII-UMP to PII and UMP (deuridylylation). Thus, controls uridylylation state and activity of the PII proteins, and plays an important role in the regulation of nitrogen assimilation and metabolism. In Allorhizobium ampelinum (strain ATCC BAA-846 / DSM 112012 / S4) (Agrobacterium vitis (strain S4)), this protein is Bifunctional uridylyltransferase/uridylyl-removing enzyme.